The following is a 311-amino-acid chain: Putative methylthioribose-1-phosphate isomerase (311 aa).

Substrate is bound by residues 46–48 (RGA), Arg-80, and Gln-174. The active-site Proton donor is Asp-215. Substrate is bound at residue 224 to 225 (NK).

It belongs to the eIF-2B alpha/beta/delta subunits family. MtnA subfamily.

It carries out the reaction 5-(methylsulfanyl)-alpha-D-ribose 1-phosphate = 5-(methylsulfanyl)-D-ribulose 1-phosphate. In terms of biological role, catalyzes the interconversion of methylthioribose-1-phosphate (MTR-1-P) into methylthioribulose-1-phosphate (MTRu-1-P). The polypeptide is Putative methylthioribose-1-phosphate isomerase (Methanothermobacter thermautotrophicus (strain ATCC 29096 / DSM 1053 / JCM 10044 / NBRC 100330 / Delta H) (Methanobacterium thermoautotrophicum)).